The primary structure comprises 563 residues: Autotransporter BimA (563 aa).

Residues 1–20 form a disordered region; that stretch reads MKYRRLSLAHARQDSGQAAS. A signal peptide spans 1-48; it reads MKYRRLSLAHARQDSGQAASNARSRRFARLLCSSIAPLALGFSADAFA. Residues 61 to 472 are surface exposed passenger domain; the sequence is APNDAHGNLL…NLAISNSNAY (412 aa). Residues 65–82 enclose the WH2 domain; sequence AHGNLLDEIRRGVPLRHV. A central and acidic domains region spans residues 96 to 130; that stretch reads TLADAMRRVIDSRRTAFDSPPATPASPSPSWSDDE. A disordered region spans residues 109-350; that stretch reads RTAFDSPPAT…PARPGGGQFT (242 aa). Low complexity-rich tracts occupy residues 138-150, 162-197, and 211-227; these read ATRPASRPESAAR, PASAESPSPRSPDASPSRTPSPTFSFPSPSRTSTPR, and SPAASPRVASPRSAHSR. Composition is skewed to polar residues over residues 228–238 and 269–281; these read GSTQPPSNLST and SRGSTQPPSNLST. The outer membrane translocation of the passenger domain stretch occupies residues 473 to 509; that stretch reads TNQRIGDLQQSITETARDAYSGVAAATALTMIPDVDR. Beta stranded transmembrane passes span 510-519, 525-536, 543-549, and 553-563; these read DKMLSIGVGG, HRAVALGGTARI, RAGVAMS, and NTVGVGMSWQW. The tract at residues 510–563 is translocator domain; the sequence is DKMLSIGVGGAVYKGHRAVALGGTARIGENLKVRAGVAMSAGGNTVGVGMSWQW.

Belongs to the autotransporter-2 (AT-2) (TC 1.B.40) family. In terms of assembly, homotrimer. Interacts with host G-actin; the interaction is direct. Interacts (via central and acidic domains) with host ACTR2/ARP2 and ACTR3/ARP3.

It localises to the cell outer membrane. Its subcellular location is the cell surface. Its function is as follows. During host cell infection, required for actin-based intracellular motility. Mediates actin tail formation at one pole of the bacteria surface by recruiting host Arp2/3 (ACTR3/ARP3-ACTR2/ARP2) which leads to actin polymerization which provides the propulsive force for intracellular movement and intercellular dissemination of the bacterium. The chain is Autotransporter BimA from Burkholderia thailandensis (strain ATCC 700388 / DSM 13276 / CCUG 48851 / CIP 106301 / E264).